Reading from the N-terminus, the 313-residue chain is MAGELPIATPLPTSPLAMEYLNDFDLMKFDVKKEPLGGRPDRAIRQCNRLQPTGSVSSTPISTPCSSVPSSPSFSPTEHKTHLDDLYWMSSSSYQHVSPEALNLTPEDAVEALIGQHQMPPQLQGYESFRAHHHHHHQNQHQYQGVHHEEMGLPHHHPHHHQHQHHQTSPSPSGSSSSSQQLHHQQQHSSSSAVEDRFSDDQLVSMTVRELNRHLRGFTKDDVIRLKQKRRTLKNRGYAQSCRYKRVQQKHNLEGEKTQLVQQVEQLKQEVSRLARERDAYKIKCEKLANNNSSNFREAGSTSDNPSSPEFFM.

2 disordered regions span residues 51 to 77 (QPTG…FSPT) and 151 to 197 (MGLP…VEDR). A compositionally biased stretch (low complexity) spans 55–76 (SVSSTPISTPCSSVPSSPSFSP). Residues 154-166 (PHHHPHHHQHQHH) are compositionally biased toward basic residues. Low complexity predominate over residues 167–192 (QTSPSPSGSSSSSQQLHHQQQHSSSS). Residues 225 to 250 (RLKQKRRTLKNRGYAQSCRYKRVQQK) are basic motif. One can recognise a bZIP domain in the interval 225–288 (RLKQKRRTLK…DAYKIKCEKL (64 aa)). The segment at 253-274 (LEGEKTQLVQQVEQLKQEVSRL) is leucine-zipper. The tract at residues 292 to 313 (NSSNFREAGSTSDNPSSPEFFM) is disordered.

Belongs to the bZIP family. Maf subfamily. Homodimer or heterodimer with other bHLH-Zip transcription factors. Binds DNA as a homodimer or a heterodimer.

It localises to the nucleus. Its function is as follows. Acts as a transcriptional activator or repressor. Implicated in the regulation of cell-type specific gene expression and play a role in inductive events during lens development. This chain is Transcription factor MafB (mafb), found in Xenopus laevis (African clawed frog).